A 128-amino-acid chain; its full sequence is uncharacterized protein (128 aa).

This is an uncharacterized protein from Mycoplasma pneumoniae (strain ATCC 29342 / M129 / Subtype 1) (Mycoplasmoides pneumoniae).